Here is a 342-residue protein sequence, read N- to C-terminus: tRNA-specific 2-thiouridylase MnmA (342 aa).

ATP contacts are provided by residues 6 to 13 and leucine 32; that span reads LLSGGVDS. Cysteine 92 serves as the catalytic Nucleophile. An intrachain disulfide couples cysteine 92 to cysteine 191. An ATP-binding site is contributed by glycine 116. Positions 138-140 are interaction with tRNA; it reads KDQ. The active-site Cysteine persulfide intermediate is cysteine 191. The tract at residues 293-294 is interaction with tRNA; sequence RY.

It belongs to the MnmA/TRMU family.

The protein resides in the cytoplasm. It catalyses the reaction S-sulfanyl-L-cysteinyl-[protein] + uridine(34) in tRNA + AH2 + ATP = 2-thiouridine(34) in tRNA + L-cysteinyl-[protein] + A + AMP + diphosphate + H(+). Functionally, catalyzes the 2-thiolation of uridine at the wobble position (U34) of tRNA, leading to the formation of s(2)U34. In Helicobacter acinonychis (strain Sheeba), this protein is tRNA-specific 2-thiouridylase MnmA.